The primary structure comprises 138 residues: Acidic phospholipase A2 jerdoxin (138 aa).

An N-terminal signal peptide occupies residues 1–16 (MRTLWIMAVLLVGVEG). Intrachain disulfides connect Cys42-Cys131, Cys44-Cys60, Cys59-Cys111, Cys65-Cys138, Cys66-Cys104, Cys73-Cys97, and Cys91-Cys102. Ca(2+)-binding residues include Tyr43, Gly45, and Gly47. Residue His63 is part of the active site. Position 64 (Asp64) interacts with Ca(2+). Asp105 is an active-site residue.

This sequence belongs to the phospholipase A2 family. Group II subfamily. D49 sub-subfamily. In terms of assembly, monomer. It depends on Ca(2+) as a cofactor. In terms of tissue distribution, expressed by the venom gland.

It localises to the secreted. The enzyme catalyses a 1,2-diacyl-sn-glycero-3-phosphocholine + H2O = a 1-acyl-sn-glycero-3-phosphocholine + a fatty acid + H(+). Functionally, snake venom phospholipase A2 (PLA2) that displays edema-inducing activities, exhibits indirect hemolytic activity, and inhibits ADP-induced platelet aggregation. PLA2 catalyzes the calcium-dependent hydrolysis of the 2-acyl groups in 3-sn-phosphoglycerides. The sequence is that of Acidic phospholipase A2 jerdoxin from Protobothrops jerdonii (Jerdon's pitviper).